The chain runs to 288 residues: 4-hydroxybenzoate octaprenyltransferase (288 aa).

The next 8 helical transmembrane spans lie at Ile-23–Ile-43, Ala-46–Val-66, Ile-98–Thr-118, Leu-141–Val-161, Glu-163–Tyr-183, Leu-213–Met-233, Asn-234–Gln-254, and Ala-268–Trp-288.

This sequence belongs to the UbiA prenyltransferase family. Mg(2+) serves as cofactor.

It localises to the cell inner membrane. The enzyme catalyses all-trans-octaprenyl diphosphate + 4-hydroxybenzoate = 4-hydroxy-3-(all-trans-octaprenyl)benzoate + diphosphate. It functions in the pathway cofactor biosynthesis; ubiquinone biosynthesis. Functionally, catalyzes the prenylation of para-hydroxybenzoate (PHB) with an all-trans polyprenyl group. Mediates the second step in the final reaction sequence of ubiquinone-8 (UQ-8) biosynthesis, which is the condensation of the polyisoprenoid side chain with PHB, generating the first membrane-bound Q intermediate 3-octaprenyl-4-hydroxybenzoate. The sequence is that of 4-hydroxybenzoate octaprenyltransferase from Yersinia pseudotuberculosis serotype O:1b (strain IP 31758).